The primary structure comprises 168 residues: MSSQSNTGNSIEAPQLPIPGQTNGSANVTVDGAGVNVGIQNGSQGQKTGMDLYFDQALNYMGEHPVITGFGAFLTLYFTAGAYKSISKGLNGGKSTTAFLKGGFDPKMNSKEALQILNLTENTLTKKKLKEVHRKIMLANHPDKGGSPFLATKINEAKDFLEKRGISK.

The span at 1-12 (MSSQSNTGNSIE) shows a compositional bias: polar residues. The interval 1–29 (MSSQSNTGNSIEAPQLPIPGQTNGSANVT) is disordered. Residues 1–65 (MSSQSNTGNS…QALNYMGEHP (65 aa)) lie on the Mitochondrial intermembrane side of the membrane. The helical transmembrane segment at 66 to 83 (VITGFGAFLTLYFTAGAY) threads the bilayer. Residues 84–168 (KSISKGLNGG…DFLEKRGISK (85 aa)) lie on the Mitochondrial matrix side of the membrane. One can recognise a J domain in the interval 112–168 (EALQILNLTENTLTKKKLKEVHRKIMLANHPDKGGSPFLATKINEAKDFLEKRGISK).

The protein belongs to the TIM14 family. Homodimer and heterodimer with PAM16/TIM16. Homodimerization may not be relevant in vivo, while heterodimerization is essential for activity regulation of mtHSP70. Component of the PAM complex, at least composed of mtHsp70, MGE1, TIM44, PAM16, PAM17 and PAM18/TIM14. Interacts directly with mtHsp70. Interacts directly with TIM17 subunit of the TIM23 complex.

The protein localises to the mitochondrion inner membrane. Functionally, essential component of the PAM complex, a complex required for the translocation of transit peptide-containing proteins from the inner membrane into the mitochondrial matrix in an ATP-dependent manner. In the complex, it is required to stimulate activity of mtHSP70 (SSC1). This is Mitochondrial import inner membrane translocase subunit TIM14 (PAM18) from Saccharomyces cerevisiae (strain ATCC 204508 / S288c) (Baker's yeast).